Here is a 396-residue protein sequence, read N- to C-terminus: Obg-like ATPase 1 (396 aa).

An OBG-type G domain is found at 23-283 (LKIGIVGLPN…LSAEERQKYL (261 aa)). ATP is bound at residue 32 to 37 (NVGKST). Residues S36 and T56 each contribute to the Mg(2+) site. L231 is an ATP binding site. Positions 267 to 274 (LELKLQEL) match the Nuclear export signal motif. K294 is modified (N6-acetyllysine). The region spanning 304–387 (QLEYFFTAGP…EDGDIIFFKF (84 aa)) is the TGS domain.

Belongs to the TRAFAC class OBG-HflX-like GTPase superfamily. OBG GTPase family. YchF/OLA1 subfamily. In terms of assembly, monomer. It depends on Mg(2+) as a cofactor. In terms of tissue distribution, expressed in all tissues tested but its expression is more abundant in testis, liver, lung, and brain. Overexpressed in several malignancies, including cancers of the colon, rectum, ovary, lung, stomach, and uterus.

It is found in the cytoplasm. The protein localises to the nucleus. The protein resides in the nucleolus. Functionally, hydrolyzes ATP, and can also hydrolyze GTP with lower efficiency. Has lower affinity for GTP. The protein is Obg-like ATPase 1 of Homo sapiens (Human).